A 448-amino-acid polypeptide reads, in one-letter code: Probable glycine dehydrogenase (decarboxylating) subunit 1 (448 aa).

It belongs to the GcvP family. N-terminal subunit subfamily. The glycine cleavage system is composed of four proteins: P, T, L and H. In this organism, the P 'protein' is a heterodimer of two subunits.

It carries out the reaction N(6)-[(R)-lipoyl]-L-lysyl-[glycine-cleavage complex H protein] + glycine + H(+) = N(6)-[(R)-S(8)-aminomethyldihydrolipoyl]-L-lysyl-[glycine-cleavage complex H protein] + CO2. In terms of biological role, the glycine cleavage system catalyzes the degradation of glycine. The P protein binds the alpha-amino group of glycine through its pyridoxal phosphate cofactor; CO(2) is released and the remaining methylamine moiety is then transferred to the lipoamide cofactor of the H protein. The chain is Probable glycine dehydrogenase (decarboxylating) subunit 1 from Staphylococcus carnosus (strain TM300).